The chain runs to 176 residues: Translation initiation factor IF-3 (176 aa).

Belongs to the IF-3 family. As to quaternary structure, monomer.

It localises to the cytoplasm. Its function is as follows. IF-3 binds to the 30S ribosomal subunit and shifts the equilibrium between 70S ribosomes and their 50S and 30S subunits in favor of the free subunits, thus enhancing the availability of 30S subunits on which protein synthesis initiation begins. This chain is Translation initiation factor IF-3, found in Rippkaea orientalis (strain PCC 8801 / RF-1) (Cyanothece sp. (strain PCC 8801)).